The following is a 1033-amino-acid chain: Collagen alpha-2(I) chain (1033 aa).

The disordered stretch occupies residues 1–1033; that stretch reads SGGFDFSFLP…FGYEGDFYRA (1033 aa). Low complexity-rich tracts occupy residues 25–71, 154–175, and 221–242; these read LGPG…ARGP, SRGS…SAGP, and PGAN…AGAP. Residues 276–285 show a composition bias toward gly residues; the sequence is GESGGKGEPG. Positions 286-296 are enriched in low complexity; the sequence is SAGPQGPPGSS. Residues 318-327 show a composition bias toward gly residues; that stretch reads GLRGGPGSRG. 2 stretches are compositionally biased toward low complexity: residues 340–356 and 391–410; these read PAGA…RGPS and LPGI…RGEA. A compositionally biased stretch (gly residues) spans 459–468; that stretch reads GVQGGKGEQG. Composition is skewed to low complexity over residues 519-528 and 540-550; these read PSGAIGSRGP and EPGVVGAPGTA. Over residues 551 to 560 the composition is skewed to gly residues; the sequence is GPAGSGGLPG. Low complexity-rich tracts occupy residues 583-627 and 634-654; these read VGTT…PRGS and VGPA…QPGA. Over residues 655–664 the composition is skewed to basic and acidic residues; the sequence is KGERGTKGPK. Residues 672-682 are compositionally biased toward low complexity; it reads PTGPVGSAGPA. Residues 692–701 are compositionally biased toward gly residues; the sequence is GSRGDGGPPG. The span at 703-712 shows a compositional bias: low complexity; that stretch reads TGFPGAAGRT. Positions 749–758 are enriched in gly residues; the sequence is GETGAGGPPG. Low complexity-rich tracts occupy residues 766–793 and 801–811; these read SGEP…LGLP and LPGVAGAVGEP. Over residues 812-834 the composition is skewed to gly residues; it reads GPLGIGPPGARGPSGGVGPGVNG. The segment covering 873–909 has biased composition (low complexity); it reads AAGAPGPHGAVGPAGKHGNRGEPGPVGSAGPVGALGP. Basic and acidic residues predominate over residues 919-930; sequence RGDKGEAGDKGP. Positions 1003–1015 are enriched in pro residues; it reads SGPPGPPGPPGPP.

It belongs to the fibrillar collagen family. Trimers of one alpha 2(I) and two alpha 1(I) chains. Interacts (via C-terminus) with TMEM131 (via PapD-L domain); the interaction is direct and is involved in assembly and TRAPPIII ER-to-Golgi transport complex-dependent secretion of collagen. Prolines at the third position of the tripeptide repeating unit (G-X-Y) are hydroxylated in some or all of the chains. Expressed in bone.

It is found in the secreted. The protein localises to the extracellular space. Its subcellular location is the extracellular matrix. Functionally, type I collagen is a member of group I collagen (fibrillar forming collagen). This is Collagen alpha-2(I) chain from Mylodon darwinii (Giant ground sloth).